The primary structure comprises 167 residues: SsrA-binding protein (167 aa).

Basic and acidic residues predominate over residues 139–158 (QNHDKRDAAKDRDWQRDKQR). The disordered stretch occupies residues 139-167 (QNHDKRDAAKDRDWQRDKQRVMRRHNRDA).

Belongs to the SmpB family.

Its subcellular location is the cytoplasm. In terms of biological role, required for rescue of stalled ribosomes mediated by trans-translation. Binds to transfer-messenger RNA (tmRNA), required for stable association of tmRNA with ribosomes. tmRNA and SmpB together mimic tRNA shape, replacing the anticodon stem-loop with SmpB. tmRNA is encoded by the ssrA gene; the 2 termini fold to resemble tRNA(Ala) and it encodes a 'tag peptide', a short internal open reading frame. During trans-translation Ala-aminoacylated tmRNA acts like a tRNA, entering the A-site of stalled ribosomes, displacing the stalled mRNA. The ribosome then switches to translate the ORF on the tmRNA; the nascent peptide is terminated with the 'tag peptide' encoded by the tmRNA and targeted for degradation. The ribosome is freed to recommence translation, which seems to be the essential function of trans-translation. The protein is SsrA-binding protein of Xanthomonas euvesicatoria pv. vesicatoria (strain 85-10) (Xanthomonas campestris pv. vesicatoria).